The following is a 27-amino-acid chain: Cupiennin-3c (27 aa).

Expressed by the venom gland.

It is found in the secreted. The protein is Cupiennin-3c of Cupiennius salei (American wandering spider).